The following is a 661-amino-acid chain: PAN2-PAN3 deadenylation complex subunit PAN3 (661 aa).

Disordered regions lie at residues 1-26 (MASA…AREN) and 53-130 (DPHK…LRQD). The C3H1-type zinc finger occupies 26 to 55 (NAKDTLCRNITIYGRCRYEDKGCAFNHDPH). Low complexity predominate over residues 75 to 102 (SFTPSLLSSNGSSPTSTPATTKKMTTIS). Residues 115-130 (SVVSRSNASTPGLRQD) are compositionally biased toward polar residues. Positions 263–524 (QTLPNTQLPA…NIDIFITGIS (262 aa)) are pseudokinase domain. Residues arginine 315, 364–371 (DYHPLSKT), and 424–425 (SK) each bind ATP. Residues 525-563 (SQLMSTFDSALHLDDQLTSDLSRELENGRLVRLMTKLNF) adopt a coiled-coil conformation. A knob domain region spans residues 564 to 661 (VNERPEYEHD…ALMKPARRMH (98 aa)).

Belongs to the protein kinase superfamily. PAN3 family. Homodimer. Forms a heterotrimer with a catalytic subunit pan2 to form the poly(A)-nuclease (PAN) deadenylation complex. Interacts (via PAM-2 motif) with poly(A)-binding protein pab1 (via PABC domain), conferring substrate specificity of the enzyme complex.

The protein resides in the cytoplasm. Its function is as follows. Regulatory subunit of the poly(A)-nuclease (PAN) deadenylation complex, one of two cytoplasmic mRNA deadenylases involved in mRNA turnover. PAN specifically shortens poly(A) tails of RNA and the activity is stimulated by poly(A)-binding protein pab1. PAN deadenylation is followed by rapid degradation of the shortened mRNA tails by the CCR4-NOT complex. Deadenylated mRNAs are then degraded by two alternative mechanisms, namely exosome-mediated 3'-5' exonucleolytic degradation, or deadenylation-dependent mRNA decaping and subsequent 5'-3' exonucleolytic degradation by xrn1. May also be involved in post-transcriptional maturation of mRNA poly(A) tails. pan3 acts as a positive regulator for PAN activity, recruiting the catalytic subunit pan2 to mRNA via its interaction with RNA and with pab1. This chain is PAN2-PAN3 deadenylation complex subunit PAN3, found in Neosartorya fischeri (strain ATCC 1020 / DSM 3700 / CBS 544.65 / FGSC A1164 / JCM 1740 / NRRL 181 / WB 181) (Aspergillus fischerianus).